The chain runs to 136 residues: Large ribosomal subunit protein uL16c (136 aa).

This sequence belongs to the universal ribosomal protein uL16 family. Part of the 50S ribosomal subunit.

Its subcellular location is the plastid. The protein resides in the chloroplast. The sequence is that of Large ribosomal subunit protein uL16c from Saccharum hybrid (Sugarcane).